We begin with the raw amino-acid sequence, 276 residues long: Glutamate 5-kinase (276 aa).

Position 14 (K14) interacts with ATP. The substrate site is built by S54, D141, and N157. Residues 177 to 178 (SD) and 219 to 225 (TGGMLTK) contribute to the ATP site.

This sequence belongs to the glutamate 5-kinase family.

The protein localises to the cytoplasm. The catalysed reaction is L-glutamate + ATP = L-glutamyl 5-phosphate + ADP. It functions in the pathway amino-acid biosynthesis; L-proline biosynthesis; L-glutamate 5-semialdehyde from L-glutamate: step 1/2. In terms of biological role, catalyzes the transfer of a phosphate group to glutamate to form L-glutamate 5-phosphate. The chain is Glutamate 5-kinase from Listeria monocytogenes serotype 4b (strain CLIP80459).